A 306-amino-acid chain; its full sequence is Ornithine carbamoyltransferase (306 aa).

Carbamoyl phosphate is bound by residues serine 46–threonine 49, glutamine 73, arginine 97, and histidine 124–glutamine 127. Residues asparagine 156, aspartate 220, and serine 224–methionine 225 contribute to the L-ornithine site. Carbamoyl phosphate is bound by residues cysteine 260 to leucine 261 and arginine 288.

It belongs to the aspartate/ornithine carbamoyltransferase superfamily. OTCase family.

The protein localises to the cytoplasm. It catalyses the reaction carbamoyl phosphate + L-ornithine = L-citrulline + phosphate + H(+). It participates in amino-acid degradation; L-arginine degradation via ADI pathway; carbamoyl phosphate from L-arginine: step 2/2. Its function is as follows. Reversibly catalyzes the transfer of the carbamoyl group from carbamoyl phosphate (CP) to the N(epsilon) atom of ornithine (ORN) to produce L-citrulline. The polypeptide is Ornithine carbamoyltransferase (Campylobacter jejuni subsp. jejuni serotype O:6 (strain 81116 / NCTC 11828)).